We begin with the raw amino-acid sequence, 1188 residues long: Integrin alpha-11 (1188 aa).

The N-terminal stretch at Met-1–Thr-22 is a signal peptide. The Extracellular portion of the chain corresponds to Phe-23–Pro-1141. FG-GAP repeat units lie at residues Asn-24 to Lys-85 and Val-91 to Thr-151. Cysteines 76 and 83 form a disulfide. Residues Asn-82 and Asn-95 are each glycosylated (N-linked (GlcNAc...) asparagine). 2 disulfide bridges follow: Cys-121–Cys-139 and Cys-129–Cys-159. The VWFA domain maps to Asp-164–Leu-345. N-linked (GlcNAc...) asparagine glycans are attached at residues Asn-291, Asn-331, Asn-358, Asn-449, and Asn-462. 5 FG-GAP repeats span residues Thr-355–His-406, Leu-411–Asn-461, Asn-462–Tyr-527, Asn-528–Lys-586, and Gln-590–Ser-650. Ca(2+)-binding residues include Asp-488, Asn-490, Asp-492, and Asp-496. Asn-528 carries N-linked (GlcNAc...) asparagine glycosylation. Positions 551, 553, 555, 559, 613, 615, 617, and 621 each coordinate Ca(2+). Asn-642 carries an N-linked (GlcNAc...) asparagine glycan. 3 cysteine pairs are disulfide-bonded: Cys-659-Cys-668, Cys-674-Cys-729, and Cys-781-Cys-787. A glycan (N-linked (GlcNAc...) asparagine) is linked at Asn-694. Asn-857 carries N-linked (GlcNAc...) asparagine glycosylation. Cys-881 and Cys-893 are disulfide-bonded. N-linked (GlcNAc...) asparagine glycosylation is found at Asn-894, Asn-973, Asn-1031, Asn-1039, and Asn-1059. A helical transmembrane segment spans residues Ile-1142–Trp-1164. Residues Lys-1165–Lys-1188 are Cytoplasmic-facing.

It belongs to the integrin alpha chain family. In terms of assembly, heterodimer of an alpha and a beta subunit. Alpha-11 associates with beta-1. Interacts with RAB21.

Its subcellular location is the membrane. Its function is as follows. Integrin alpha-11/beta-1 is a receptor for collagen. In Mus musculus (Mouse), this protein is Integrin alpha-11 (Itga11).